Consider the following 493-residue polypeptide: MAPQFKRPELFGFDKSHAQSFVQGKWISSPNNKTFEVDNPATGEIIGKVADVSVEETKKAISAANEAFKTYKNFTHVQRSQLLERWAELIMENKDDLVKMLTLENGKPLSQAEMEVTTCSGYLKWYAAEAVRTFGDVAPSSLQSQNFLISIKQPVGVSALITPWNFPAAMIARKGGAALAAGCTAIFLPAFRTPYVCLGLVRLAQEAGFPDGVLNVITSSDASAHGKELTTNPIVRKVSFTGSTNVGKILMGQSASTIKKVSMELGGNAPFIVFPDFPIDQAVESFCTIKFNSCGQVCVCPNRVYVHKNVYDEFVSKLTEKVKTIKVGDGFDSSSAVGPLISQDGCKKVSKHIEDAVSKGAKITVGGKEISSSKGYFFEPTVLSGVTQDMLVASEETFGPLASVFKFDDTEEVIEWANDSDVGLAGYVFTNNLSTMIHVAKELEVGLVGANIEMVDEPFISFGGIKQSGFGKEAGRLGVQEFMVVKEINLKTL.

242 to 247 (GSTNVG) is an NAD(+) binding site. The active site involves Glu-264. Residue Cys-298 is the Nucleophile of the active site.

Belongs to the aldehyde dehydrogenase family. Homotetramer.

It is found in the cytoplasm. The catalysed reaction is succinate semialdehyde + NAD(+) + H2O = succinate + NADH + 2 H(+). The enzyme catalyses succinate semialdehyde + NADP(+) + H2O = succinate + NADPH + 2 H(+). The protein operates within amino-acid degradation; 4-aminobutanoate degradation. Its function is as follows. Catalyzes the oxidation of succinate semialdehyde to succinate. Can utilize both NAD(+) or NADP(+) as a coenzyme. Functions in the GABA shunt, which allows to bypass 2 reactions in the TCA cycle by removing alpha-ketoglutarate from the cycle and feeding succinate and NADH back into the cycle. This is Succinate-semialdehyde dehydrogenase [NADP(+)] 2 (ssd2) from Schizosaccharomyces pombe (strain 972 / ATCC 24843) (Fission yeast).